A 23-amino-acid chain; its full sequence is Unknown protein 1 (23 aa).

This chain is Unknown protein 1, found in Coniferiporia sulphurascens (Laminated root rot fungus).